A 136-amino-acid polypeptide reads, in one-letter code: Large-conductance mechanosensitive channel (136 aa).

4 helical membrane-spanning segments follow: residues 9–29, 32–52, 54–74, and 79–99; these read AFASRGNVIDMAVGIIIGAAF, IVSSFVADIIMPPIGIILGGV, FSDLSVVLLAAQGDAPAVVIA, and IQTVIDFTIIAFAIFMGLKAI.

The protein belongs to the MscL family. As to quaternary structure, homopentamer.

The protein localises to the cell inner membrane. Channel that opens in response to stretch forces in the membrane lipid bilayer. May participate in the regulation of osmotic pressure changes within the cell. This Shewanella oneidensis (strain ATCC 700550 / JCM 31522 / CIP 106686 / LMG 19005 / NCIMB 14063 / MR-1) protein is Large-conductance mechanosensitive channel.